A 138-amino-acid polypeptide reads, in one-letter code: MRTLWIMAVLLVVVEGSLVQLGKMIFQETGKNPATSYGLYGCNCGPGGRRKPKDATDRCCFLHKCCYKKLTDCDPIKDSYSYSWVNKAIVCGGDDPHLKEMCECDKAMAICFRENLDTYDKKKKINLKLFCKKTSEQC.

The signal sequence occupies residues 1–16; the sequence is MRTLWIMAVLLVVVEG. 6 disulfide bridges follow: cysteine 42-cysteine 131, cysteine 44-cysteine 60, cysteine 59-cysteine 111, cysteine 65-cysteine 138, cysteine 66-cysteine 104, and cysteine 91-cysteine 102. The tract at residues 121 to 133 is important for membrane-damaging activities in eukaryotes and bacteria; heparin-binding; that stretch reads KKKKINLKLFCKK.

This sequence belongs to the phospholipase A2 family. Group II subfamily. K49 sub-subfamily. In terms of tissue distribution, expressed by the venom gland.

The protein resides in the secreted. In terms of biological role, snake venom phospholipase A2 homolog that lacks catalytic activity. It shows myotoxic and weak anticoagulant activities. A model of myotoxic mechanism has been proposed: an apo Lys49-PLA2 is activated by the entrance of a hydrophobic molecule (e.g. fatty acid) at the hydrophobic channel of the protein leading to a reorientation of a monomer. This reorientation causes a transition between 'inactive' to 'active' states, causing alignment of C-terminal and membrane-docking sites (MDoS) side-by-side and putting the membrane-disruption sites (MDiS) in the same plane, exposed to solvent and in a symmetric position for both monomers. The MDoS region stabilizes the toxin on membrane by the interaction of charged residues with phospholipid head groups. Subsequently, the MDiS region destabilizes the membrane with penetration of hydrophobic residues. This insertion causes a disorganization of the membrane, allowing an uncontrolled influx of ions (i.e. calcium and sodium), and eventually triggering irreversible intracellular alterations and cell death. This chain is Basic phospholipase A2 homolog CTs-K49a, found in Trimeresurus stejnegeri (Chinese green tree viper).